The chain runs to 402 residues: GDSL esterase/lipase At1g20120 (402 aa).

A signal peptide spans 1-35 (MLQDRVSGSLSSSKISRCVLFLSLFCFFLLTMHAS). The interval 41 to 69 (RVPNPGPSPAPEPKPCPSPGPNPAPATTK) is disordered. Pro residues predominate over residues 44 to 64 (NPGPSPAPEPKPCPSPGPNPA). Asparagine 73 carries N-linked (GlcNAc...) asparagine glycosylation. Catalysis depends on serine 85, which acts as the Nucleophile. Residues asparagine 314 and asparagine 367 are each glycosylated (N-linked (GlcNAc...) asparagine). Residues aspartate 375 and histidine 378 contribute to the active site.

The protein belongs to the 'GDSL' lipolytic enzyme family.

The protein localises to the secreted. This chain is GDSL esterase/lipase At1g20120, found in Arabidopsis thaliana (Mouse-ear cress).